The following is a 208-amino-acid chain: Ubiquitin-conjugating enzyme E2 S (208 aa).

The UBC core domain maps to 14–160 (QTIRQVMKEL…ARMMTEIHAQ (147 aa)). Cys-98 acts as the Glycyl thioester intermediate in catalysis. Positions 161–196 (PAKCGAGASDAKDDDGPSTKKHAGVDKKLQDKKKEK) are disordered. Residues 170-196 (DAKDDDGPSTKKHAGVDKKLQDKKKEK) are compositionally biased toward basic and acidic residues.

Belongs to the ubiquitin-conjugating enzyme family.

It catalyses the reaction S-ubiquitinyl-[E1 ubiquitin-activating enzyme]-L-cysteine + [E2 ubiquitin-conjugating enzyme]-L-cysteine = [E1 ubiquitin-activating enzyme]-L-cysteine + S-ubiquitinyl-[E2 ubiquitin-conjugating enzyme]-L-cysteine.. It functions in the pathway protein modification; protein ubiquitination. Catalyzes the covalent attachment of ubiquitin to other proteins. Acts as an essential factor of the anaphase promoting complex/cyclosome (APC/C), a cell cycle-regulated ubiquitin ligase that controls progression through mitosis. Acts by specifically elongating polyubiquitin chains initiated by the E2 enzyme vih/UbcH10 on APC/C substrates, enhancing the degradation of APC/C substrates by the proteasome and promoting mitotic exit. In Drosophila grimshawi (Hawaiian fruit fly), this protein is Ubiquitin-conjugating enzyme E2 S.